A 328-amino-acid polypeptide reads, in one-letter code: ATP synthase mitochondrial F1 complex assembly factor 1 (328 aa).

Residues Met1–Glu57 constitute a mitochondrion transit peptide.

Belongs to the ATP11 family. Interacts with ATP5F1B; involved in the assembly of the F1 component of the mitochondrial ATP synthase (ATPase). As to expression, weakly expressed in muscle.

Its subcellular location is the mitochondrion inner membrane. Has a complex stabilizing activity in the assembly of the mitochondrial F1-F0 complex. This is ATP synthase mitochondrial F1 complex assembly factor 1 from Homo sapiens (Human).